The following is a 332-amino-acid chain: GVSYFSPRFGFTCNMVENFEVVLANGDIVNANATSHRKLWKALRGGSNNFGIVTAITLRVFSQGKFWGGQTFHPISTRKDHFHALENLIAAVPYDKYAHFINTIVITNASYGNWFIGNSLQYTKSDPPTPFPETFKPFTDIPRVALFPGAPDNTLRVDNHTAFTLEYAALNVYPKRWQFATISFGNSAEMMEDFFQMANETIQPFLTLPGFLLSVAYQPLPTLMSERYGEVDSLGPIQTQGNMFYIHWAMSVDGSEVETDRKFEKVTRDLFQRAEAKAREKGLRRDFLQLTSNGTLKELWRVSKEYDPTGMFQKQVPGGFKLSEMDEDSMEL.

It belongs to the oxygen-dependent FAD-linked oxidoreductase family.

Its pathway is secondary metabolite biosynthesis. In terms of biological role, FAD-dependent monooxygenase; part of the gene cluster that mediates the biosynthesis of elsinochrome C, a perelyenequinone phytotoxin structurally similar to cercosporin. The first step of elsinochrome C biosynthesis is performed by the polyketide synthase elcA which catalyzes the formation of nor-toralactone. The starter unit acyltransferase (SAT) domain of elcA initiates polyketide extension by the selective utilization of acetyl-CoA, which is elongated to the heptaketide in the beta-ketoacyl synthase (KS) domain by successive condensations with six malonyl units introduced by the malonyl acyltransferase (MAT) domain. The product template (PT) domain catalyzes C4-C9 and C2-C11 aldol cyclizations and dehydrations to a trihydroxynaphthalene, which is thought to be delivered to the thioesterase (TE) domain for product release. The bifunctional enzyme elcB then methylates nor-toralactone to toralactone before conducting an unusual oxidative aromatic ring opening. The next step in perylenequinone biosynthesis is an O-methylation at the nascent OH-6 of the elcB product performed by the O-methyltransferase elcD. The oxidative coupling of the two monomeric naphthol units in perylenequinone biosynthesis is catalyzed by the FAD-dependent monooxygenase elcE and the multicopper oxidase elcG. ElcG might catalyze the first intermolecular coupling in a regio- and stereo-selective manner via a phenol radical coupling mechanism and the elcE could forge the second C-C bond intramolecularly via a hydride transfer mechanism. The fasciclin domain-containing protein elcF might also play a role duting this step. The last piece of the puzzle in the biosynthesis of elsinochrome C is the additional annulation by enolate coupling to afford the dihydrobenzo(ghi)perylenequinone system, catalyzed by the FAD-dependent monooxygenase elcH. The sequence is that of FAD-dependent monooxygenase elcE from Phaeosphaeria nodorum (strain SN15 / ATCC MYA-4574 / FGSC 10173) (Glume blotch fungus).